The sequence spans 61 residues: Large ribosomal subunit protein uL30 (61 aa).

The protein belongs to the universal ribosomal protein uL30 family. Part of the 50S ribosomal subunit.

This is Large ribosomal subunit protein uL30 from Neisseria gonorrhoeae (strain ATCC 700825 / FA 1090).